Here is a 329-residue protein sequence, read N- to C-terminus: GTP 3',8-cyclase (329 aa).

One can recognise a Radical SAM core domain in the interval 8 to 234; that stretch reads AFARKFYYLR…QLRQRSDGPA (227 aa). Arg-17 is a GTP binding site. Cys-24 and Cys-28 together coordinate [4Fe-4S] cluster. Tyr-30 lines the S-adenosyl-L-methionine pocket. A [4Fe-4S] cluster-binding site is contributed by Cys-31. Residue Arg-68 participates in GTP binding. An S-adenosyl-L-methionine-binding site is contributed by Gly-72. Position 99 (Thr-99) interacts with GTP. S-adenosyl-L-methionine is bound at residue Ser-123. GTP is bound at residue Lys-160. Position 194 (Met-194) interacts with S-adenosyl-L-methionine. [4Fe-4S] cluster-binding residues include Cys-257 and Cys-260. Residue 262–264 coordinates GTP; the sequence is RLR. Residue Cys-274 participates in [4Fe-4S] cluster binding.

This sequence belongs to the radical SAM superfamily. MoaA family. As to quaternary structure, monomer and homodimer. The cofactor is [4Fe-4S] cluster.

It catalyses the reaction GTP + AH2 + S-adenosyl-L-methionine = (8S)-3',8-cyclo-7,8-dihydroguanosine 5'-triphosphate + 5'-deoxyadenosine + L-methionine + A + H(+). It participates in cofactor biosynthesis; molybdopterin biosynthesis. In terms of biological role, catalyzes the cyclization of GTP to (8S)-3',8-cyclo-7,8-dihydroguanosine 5'-triphosphate. The sequence is that of GTP 3',8-cyclase from Shigella boydii serotype 18 (strain CDC 3083-94 / BS512).